Here is a 309-residue protein sequence, read N- to C-terminus: Protein FdhE (309 aa).

It belongs to the FdhE family.

The protein localises to the cytoplasm. Functionally, necessary for formate dehydrogenase activity. The chain is Protein FdhE from Escherichia coli O139:H28 (strain E24377A / ETEC).